A 243-amino-acid chain; its full sequence is Pyridoxine 5'-phosphate synthase (243 aa).

N9 contacts 3-amino-2-oxopropyl phosphate. 11–12 lines the 1-deoxy-D-xylulose 5-phosphate pocket; it reads DH. Residue R20 coordinates 3-amino-2-oxopropyl phosphate. H45 (proton acceptor) is an active-site residue. Residues R47 and H52 each coordinate 1-deoxy-D-xylulose 5-phosphate. E72 functions as the Proton acceptor in the catalytic mechanism. Position 102 (T102) interacts with 1-deoxy-D-xylulose 5-phosphate. Catalysis depends on H193, which acts as the Proton donor. 3-amino-2-oxopropyl phosphate contacts are provided by residues G194 and 215–216; that span reads GH.

Belongs to the PNP synthase family. As to quaternary structure, homooctamer; tetramer of dimers.

It localises to the cytoplasm. It carries out the reaction 3-amino-2-oxopropyl phosphate + 1-deoxy-D-xylulose 5-phosphate = pyridoxine 5'-phosphate + phosphate + 2 H2O + H(+). It functions in the pathway cofactor biosynthesis; pyridoxine 5'-phosphate biosynthesis; pyridoxine 5'-phosphate from D-erythrose 4-phosphate: step 5/5. Catalyzes the complicated ring closure reaction between the two acyclic compounds 1-deoxy-D-xylulose-5-phosphate (DXP) and 3-amino-2-oxopropyl phosphate (1-amino-acetone-3-phosphate or AAP) to form pyridoxine 5'-phosphate (PNP) and inorganic phosphate. The sequence is that of Pyridoxine 5'-phosphate synthase from Photorhabdus laumondii subsp. laumondii (strain DSM 15139 / CIP 105565 / TT01) (Photorhabdus luminescens subsp. laumondii).